A 380-amino-acid chain; its full sequence is Flap endonuclease 1 (380 aa).

Residues 1–104 (MGIQGLAKLI…GELAKRSERR (104 aa)) form an N-domain region. Arg19 bears the Symmetric dimethylarginine; by PRMT5 mark. Asp34 is a binding site for Mg(2+). DNA is bound by residues Arg47 and Arg70. Lys80 carries the N6-acetyllysine modification. Asp86 lines the Mg(2+) pocket. Arg100 and Arg104 each carry symmetric dimethylarginine; by PRMT5. An I-domain region spans residues 122–253 (EVEKFTKRLV…KRAVDLIQKH (132 aa)). Positions 158, 160, 179, and 181 each coordinate Mg(2+). Glu158 provides a ligand contact to DNA. The residue at position 187 (Ser187) is a Phosphoserine; by CDK2. Arg192 carries the symmetric dimethylarginine; by PRMT5 modification. Ser197 carries the phosphoserine modification. The DNA site is built by Gly231 and Asp233. Asp233 contacts Mg(2+). A phosphoserine mark is found at Ser255, Ser293, and Ser335. The disordered stretch occupies residues 327 to 380 (RLSKSRQGSTQGRLDDFFKVTGSLSSAKRKEPEPKGSTKKKAKTGAAGKFKRGK). Thr336 carries the post-translational modification Phosphothreonine. The interval 336–344 (TQGRLDDFF) is interaction with PCNA. Lys354 is subject to N6-acetyllysine. Residues 363–380 (STKKKAKTGAAGKFKRGK) are compositionally biased toward basic residues. A Phosphothreonine modification is found at Thr364. N6-acetyllysine occurs at positions 375, 377, and 380.

It belongs to the XPG/RAD2 endonuclease family. FEN1 subfamily. In terms of assembly, interacts with PCNA. Three molecules of FEN1 bind to one PCNA trimer with each molecule binding to one PCNA monomer. PCNA stimulates the nuclease activity without altering cleavage specificity. The C-terminal domain binds EP300; can bind simultaneously to both PCNA and EP300. Interacts with DDX11; this interaction is direct and increases flap endonuclease activity of FEN1. Interacts with WDR4; regulating its endonuclease activity. Interacts with POLB. Mg(2+) is required as a cofactor. Post-translationally, acetylated by EP300. Acetylation inhibits both endonuclease and exonuclease activity. Acetylation also reduces DNA-binding activity but does not affect interaction with PCNA or EP300. In terms of processing, phosphorylation upon DNA damage induces relocalization to the nuclear plasma. Phosphorylation at Ser-187 by CDK2 occurs during late S-phase and results in dissociation from PCNA. Methylation at Arg-192 by PRMT5 impedes Ser-187 phosphorylation and increases interaction with PCNA.

It localises to the nucleus. The protein resides in the nucleolus. The protein localises to the nucleoplasm. It is found in the mitochondrion. Its function is as follows. Structure-specific nuclease with 5'-flap endonuclease and 5'-3' exonuclease activities involved in DNA replication and repair. During DNA replication, cleaves the 5'-overhanging flap structure that is generated by displacement synthesis when DNA polymerase encounters the 5'-end of a downstream Okazaki fragment. It enters the flap from the 5'-end and then tracks to cleave the flap base, leaving a nick for ligation. Also involved in the long patch base excision repair (LP-BER) pathway, by cleaving within the apurinic/apyrimidinic (AP) site-terminated flap. Acts as a genome stabilization factor that prevents flaps from equilibrating into structures that lead to duplications and deletions. Also possesses 5'-3' exonuclease activity on nicked or gapped double-stranded DNA, and exhibits RNase H activity. Also involved in replication and repair of rDNA and in repairing mitochondrial DNA. This Macaca fascicularis (Crab-eating macaque) protein is Flap endonuclease 1.